We begin with the raw amino-acid sequence, 486 residues long: MKSLDDLDFDNRFARLGDAFSTEVLPDPIAEPRLVVASPAALALLDLPAEASDEPVFAELFGGHKLWSEAEPRAMVYSGHQFGSYNPRLGDGRGLLLGEVLNQAGEHWDLHLKGAGQTPYSRMGDGRAVLRSSIREFLASEALPALGIPSSRAACVIGSSTPVWREKKESAAMLLRLAPSHVRFGHFEYFYYTRQHDQLKQLAAFVLEHHFADCGAAERPYAAMFRQVVERNAELIARWQAYGFCHGVMNTDNMSILGITFDYGPYAFLDDFDANHICNHSDDSGRYSFSNQVPIAHWNLAALAQALTPLVEVDELRASLELFLPLYQAHYLDLMRRRLGLGVAVENDQALVQELLQRMQGSAVDYSLFFRRLGEDAPEQALARLRDDFVDREAFDRWGEAYRRRVEAEGGEQAARRQRMHAVNPLYVLRNYLAQQAIEAAEQGDYTEVRLLHRLLARPFEEQPGMERFTRRPPDWGRHLEISCSS.

ATP is bound by residues Gly-90, Gly-92, Arg-93, Lys-113, Asp-125, Gly-126, Arg-176, and Arg-183. Asp-252 functions as the Proton acceptor in the catalytic mechanism. Positions 253 and 262 each coordinate Mg(2+). Residue Asp-262 coordinates ATP.

It belongs to the SELO family. The cofactor is Mg(2+). Mn(2+) serves as cofactor.

It carries out the reaction L-seryl-[protein] + ATP = 3-O-(5'-adenylyl)-L-seryl-[protein] + diphosphate. The catalysed reaction is L-threonyl-[protein] + ATP = 3-O-(5'-adenylyl)-L-threonyl-[protein] + diphosphate. The enzyme catalyses L-tyrosyl-[protein] + ATP = O-(5'-adenylyl)-L-tyrosyl-[protein] + diphosphate. It catalyses the reaction L-histidyl-[protein] + UTP = N(tele)-(5'-uridylyl)-L-histidyl-[protein] + diphosphate. It carries out the reaction L-seryl-[protein] + UTP = O-(5'-uridylyl)-L-seryl-[protein] + diphosphate. The catalysed reaction is L-tyrosyl-[protein] + UTP = O-(5'-uridylyl)-L-tyrosyl-[protein] + diphosphate. Nucleotidyltransferase involved in the post-translational modification of proteins. It can catalyze the addition of adenosine monophosphate (AMP) or uridine monophosphate (UMP) to a protein, resulting in modifications known as AMPylation and UMPylation. The sequence is that of Protein nucleotidyltransferase YdiU from Pseudomonas paraeruginosa (strain DSM 24068 / PA7) (Pseudomonas aeruginosa (strain PA7)).